We begin with the raw amino-acid sequence, 193 residues long: Bcl-2-binding component 3, isoforms 1/2 (193 aa).

Disordered regions lie at residues 1–28 (MARA…FPLG) and 71–138 (ALGG…REIG). Residue Ser-10 is modified to Phosphoserine. The segment covering 71–82 (ALGGSRWPGGPR) has biased composition (low complexity). Residues 137–151 (IGAQLRRMADDLNAQ) carry the BH3 motif.

This sequence belongs to the Bcl-2 family. As to quaternary structure, interacts with MCL1 and BCL2A1. Interacts (via BH3 domain) with BCL2. Interacts with BCL2L1/BCL-XL. Interacts (via BH3 domain) with NOL3/ARC (via CARD domain); this interaction prevents BBC3 association with BCL2 and results in CASP8 activation. In terms of tissue distribution, ubiquitously expressed.

It is found in the mitochondrion. Essential mediator of p53/TP53-dependent and p53/TP53-independent apoptosis. Promotes partial unfolding of BCL2L1 and dissociation of BCL2L1 from p53/TP53, releasing the bound p53/TP53 to induce apoptosis. Regulates ER stress-induced neuronal apoptosis. The sequence is that of Bcl-2-binding component 3, isoforms 1/2 (BBC3) from Homo sapiens (Human).